Here is a 503-residue protein sequence, read N- to C-terminus: Probable DNA ligase (503 aa).

Aspartate 212 serves as a coordination point for ATP. Lysine 214 functions as the N6-AMP-lysine intermediate in the catalytic mechanism. 6 residues coordinate ATP: arginine 219, arginine 234, glutamate 263, phenylalanine 296, arginine 368, and lysine 374.

It belongs to the ATP-dependent DNA ligase family. Mg(2+) is required as a cofactor.

It catalyses the reaction ATP + (deoxyribonucleotide)n-3'-hydroxyl + 5'-phospho-(deoxyribonucleotide)m = (deoxyribonucleotide)n+m + AMP + diphosphate.. In terms of biological role, DNA ligase that seals nicks in double-stranded DNA during DNA replication, DNA recombination and DNA repair. The chain is Probable DNA ligase from Kineococcus radiotolerans (strain ATCC BAA-149 / DSM 14245 / SRS30216).